Reading from the N-terminus, the 560-residue chain is Nuclear receptor subfamily 5 group A member 2 (560 aa).

A disordered region spans residues 17-54 (GLPAIAPAPGSETPHSPKLEEKHREKRAGLPDRHRRPI). Over residues 31 to 48 (HSPKLEEKHREKRAGLPD) the composition is skewed to basic and acidic residues. Residues 104-179 (EELCPVCGDK…VGMKLEAVRA (76 aa)) constitute a DNA-binding region (nuclear receptor). Zn(2+) is bound by residues Cys107, Cys110, Cys124, Cys127, Cys143, Cys149, Cys159, and Cys162. 2 consecutive NR C4-type zinc fingers follow at residues 107–127 (CPVC…CESC) and 143–162 (CIEN…CPYC). The tract at residues 173-188 (KLEAVRADRMRGGRNK) is C-terminal extension (CTE). The short motif at 189–208 (FGPMYKRDRALKQQKKALIR) is the FTZ-F1 box element. Lys289 participates in a covalent cross-link: Glycyl lysine isopeptide (Lys-Gly) (interchain with G-Cter in SUMO1). The NR LBD domain maps to 319-558 (SIPHLILELL…NLLIEMLHAK (240 aa)). The a phospholipid derivative site is built by Tyr535 and Lys539. The interval 547 to 558 (YNNLLIEMLHAK) is AF-2.

It belongs to the nuclear hormone receptor family. NR5 subfamily. Monomer; Binds DNA as a monomer. Interacts with nuclear receptor corepressors NR0B1 and NR0B2; repressing NR5A2 nuclear receptor activity. Interacts with nuclear receptor coactivators CTNNB1, PPARGC1A and NCOA2; interaction takes place following ligand-binding and promotes target gene activation. Interacts (when sumoylated) with GPS2; interaction with GPS2 onto hepatic acute phase protein promoters prevents N-Cor corepressor complex dissociation. Interacts with HNF1A. Interacts with GRIP1. In terms of processing, sumoylated by SUMO1 at Lys-289 during the hepatic acute phase response, leading to promote interaction with GPS2 and prevent N-Cor corepressor complex dissociation.

The protein resides in the nucleus. Its subcellular location is the chromosome. Functionally, orphan nuclear receptor that binds DNA as a monomer to the 5'-TCAAGGCCA-3' sequence and controls expression of target genes: regulates key biological processes, such as early embryonic development, cholesterol and bile acid synthesis pathways, as well as liver and pancreas morphogenesis. Ligand-binding causes conformational change which causes recruitment of coactivators, promoting target gene activation. The specific ligand is unknown, but specific phospholipids, such as phosphatidylethanolamine, phosphatidylserine, dilauroyl phosphatidylcholine and diundecanoyl phosphatidylcholine can act as ligand in vitro. Acts as a pioneer transcription factor, which unwraps target DNA from histones and elicits local opening of closed chromatin. Plays a central role during preimplantation stages of embryonic development. Plays a minor role in zygotic genome activation (ZGA) by regulating a small set of two-cell stage genes. Plays a major role in morula development (2-16 cells embryos) by acting as a master regulator at the 8-cell stage, controlling expression of lineage-specifying transcription factors and genes involved in mitosis, telomere maintenance and DNA repair. Zygotic NR5A2 binds to both closed and open chromatin with other transcription factors, often at SINE B1/Alu repeats DNA elements, promoting chromatin accessibility at nearby regulatory regions. Also involved in the epiblast stage of development and embryonic stem cell pluripotency, by promoting expression of POU5F1/OCT4. Regulates other processes later in development, such as formation of connective tissue in lower jaw and middle ear, neural stem cell differentiation, ovarian follicle development and Sertoli cell differentiation. Involved in exocrine pancreas development and acinar cell differentiation. Acts as an essential transcriptional regulator of lipid metabolism. Key regulator of cholesterol 7-alpha-hydroxylase gene (CYP7A) expression in liver. Also acts as a negative regulator of inflammation in different organs, such as, liver and pancreas. Protects against intestinal inflammation via its ability to regulate glucocorticoid production. Plays an anti-inflammatory role during the hepatic acute phase response by acting as a corepressor: inhibits the hepatic acute phase response by preventing dissociation of the N-Cor corepressor complex. Acts as a regulator of immunity by promoting lymphocyte T-cell development, proliferation and effector functions. Also involved in resolution of endoplasmic reticulum stress in the liver. This Rattus norvegicus (Rat) protein is Nuclear receptor subfamily 5 group A member 2.